A 415-amino-acid chain; its full sequence is Serine hydroxymethyltransferase (415 aa).

Residues Leu120 and 124–126 (GHL) contribute to the (6S)-5,6,7,8-tetrahydrofolate site. N6-(pyridoxal phosphate)lysine is present on Lys229.

The protein belongs to the SHMT family. Homodimer. Requires pyridoxal 5'-phosphate as cofactor.

The protein resides in the cytoplasm. The enzyme catalyses (6R)-5,10-methylene-5,6,7,8-tetrahydrofolate + glycine + H2O = (6S)-5,6,7,8-tetrahydrofolate + L-serine. It participates in one-carbon metabolism; tetrahydrofolate interconversion. It functions in the pathway amino-acid biosynthesis; glycine biosynthesis; glycine from L-serine: step 1/1. Its function is as follows. Catalyzes the reversible interconversion of serine and glycine with tetrahydrofolate (THF) serving as the one-carbon carrier. This reaction serves as the major source of one-carbon groups required for the biosynthesis of purines, thymidylate, methionine, and other important biomolecules. Also exhibits THF-independent aldolase activity toward beta-hydroxyamino acids, producing glycine and aldehydes, via a retro-aldol mechanism. The sequence is that of Serine hydroxymethyltransferase from Pelotomaculum thermopropionicum (strain DSM 13744 / JCM 10971 / SI).